A 344-amino-acid polypeptide reads, in one-letter code: Protein RecA (344 aa).

Residue 66–73 (GPESSGKT) participates in ATP binding.

Belongs to the RecA family.

Its subcellular location is the cytoplasm. Functionally, can catalyze the hydrolysis of ATP in the presence of single-stranded DNA, the ATP-dependent uptake of single-stranded DNA by duplex DNA, and the ATP-dependent hybridization of homologous single-stranded DNAs. It interacts with LexA causing its activation and leading to its autocatalytic cleavage. This is Protein RecA from Methylobacillus flagellatus.